A 299-amino-acid polypeptide reads, in one-letter code: Dihydroorotate dehydrogenase B (NAD(+)), catalytic subunit (299 aa).

FMN-binding positions include Ser21 and 44-45 (KS). Substrate contacts are provided by residues Lys44, 68 to 72 (NAVGL), and Asn125. Residue Asn125 participates in FMN binding. Catalysis depends on Cys128, which acts as the Nucleophile. Lys163 serves as a coordination point for FMN. 189 to 190 (NT) contacts substrate. FMN contacts are provided by residues Gly214, 240–241 (GG), and 262–263 (GS).

It belongs to the dihydroorotate dehydrogenase family. Type 1 subfamily. Heterotetramer of 2 PyrK and 2 PyrD type B subunits. Requires FMN as cofactor.

The protein resides in the cytoplasm. The catalysed reaction is (S)-dihydroorotate + NAD(+) = orotate + NADH + H(+). It participates in pyrimidine metabolism; UMP biosynthesis via de novo pathway; orotate from (S)-dihydroorotate (NAD(+) route): step 1/1. Its function is as follows. Catalyzes the conversion of dihydroorotate to orotate with NAD(+) as electron acceptor. The polypeptide is Dihydroorotate dehydrogenase B (NAD(+)), catalytic subunit (pyrD) (Archaeoglobus fulgidus (strain ATCC 49558 / DSM 4304 / JCM 9628 / NBRC 100126 / VC-16)).